The sequence spans 70 residues: Beta-insect excitatory toxin LqqIT1 (70 aa).

Positions 2 to 65 (KNGYAVDSSG…ISDARKKYCD (64 aa)) constitute an LCN-type CS-alpha/beta domain. Cystine bridges form between Cys16-Cys37, Cys22-Cys42, Cys26-Cys44, and Cys38-Cys64.

It belongs to the long (4 C-C) scorpion toxin superfamily. Sodium channel inhibitor family. Beta subfamily. As to expression, expressed by the venom gland.

The protein localises to the secreted. Functionally, excitatory insect beta-toxins induce a spastic paralysis. They bind voltage-independently at site-4 of sodium channels (Nav) and shift the voltage of activation toward more negative potentials thereby affecting sodium channel activation and promoting spontaneous and repetitive firing. In vivo, this toxin induces a fast excitatory contraction paralysis on fly larvae. It is active only on insects. This is Beta-insect excitatory toxin LqqIT1 from Leiurus quinquestriatus quinquestriatus (Egyptian scorpion).